Here is a 375-residue protein sequence, read N- to C-terminus: Alcohol dehydrogenase 1A (375 aa).

The residue at position 2 (serine 2) is an N-acetylserine. The residue at position 23 (serine 23) is a Phosphoserine. Position 35 is a phosphotyrosine (tyrosine 35). Zn(2+) is bound at residue cysteine 47. An NAD(+)-binding site is contributed by 48-52 (GTDDH). 6 residues coordinate Zn(2+): histidine 68, cysteine 98, cysteine 101, cysteine 104, cysteine 112, and cysteine 175. NAD(+) is bound by residues 200–205 (GLGGVG), aspartate 224, lysine 229, isoleucine 270, 293–295 (VGV), 318–320 (AVY), and arginine 370.

It belongs to the zinc-containing alcohol dehydrogenase family. As to quaternary structure, dimer of identical or heterodimer of closely related subunits alpha, beta, or gamma that are encoded by genes ADH1A, ADH1B, and ADH1C, respectively. It depends on Zn(2+) as a cofactor.

It localises to the cytoplasm. It carries out the reaction a primary alcohol + NAD(+) = an aldehyde + NADH + H(+). The enzyme catalyses a secondary alcohol + NAD(+) = a ketone + NADH + H(+). The catalysed reaction is butan-1-ol + NAD(+) = butanal + NADH + H(+). It catalyses the reaction 1-propanol + NAD(+) = propanal + NADH + H(+). It carries out the reaction propan-2-ol + NAD(+) = acetone + NADH + H(+). Its function is as follows. Alcohol dehydrogenase. Oxidizes primary as well as secondary alcohols. Ethanol is a very poor substrate. The polypeptide is Alcohol dehydrogenase 1A (ADH1A) (Macaca mulatta (Rhesus macaque)).